Here is a 447-residue protein sequence, read N- to C-terminus: N-succinylarginine dihydrolase (447 aa).

Substrate contacts are provided by residues 19–28, Asn-110, and 137–138; these read AGLSFGNEAS and HR. Glu-174 is an active-site residue. Residue Arg-212 participates in substrate binding. His-248 is an active-site residue. Substrate contacts are provided by Asp-250 and Asn-359. The Nucleophile role is filled by Cys-365.

It belongs to the succinylarginine dihydrolase family. As to quaternary structure, homodimer.

It carries out the reaction N(2)-succinyl-L-arginine + 2 H2O + 2 H(+) = N(2)-succinyl-L-ornithine + 2 NH4(+) + CO2. It functions in the pathway amino-acid degradation; L-arginine degradation via AST pathway; L-glutamate and succinate from L-arginine: step 2/5. Functionally, catalyzes the hydrolysis of N(2)-succinylarginine into N(2)-succinylornithine, ammonia and CO(2). The protein is N-succinylarginine dihydrolase of Salmonella typhi.